A 309-amino-acid polypeptide reads, in one-letter code: Porphobilinogen deaminase (309 aa).

An S-(dipyrrolylmethanemethyl)cysteine modification is found at Cys241.

The protein belongs to the HMBS family. Monomer. Dipyrromethane is required as a cofactor.

The catalysed reaction is 4 porphobilinogen + H2O = hydroxymethylbilane + 4 NH4(+). The protein operates within porphyrin-containing compound metabolism; protoporphyrin-IX biosynthesis; coproporphyrinogen-III from 5-aminolevulinate: step 2/4. Functionally, tetrapolymerization of the monopyrrole PBG into the hydroxymethylbilane pre-uroporphyrinogen in several discrete steps. This chain is Porphobilinogen deaminase, found in Bacillus cereus (strain AH820).